The sequence spans 128 residues: Sulfurtransferase TusD (128 aa).

The Cysteine persulfide intermediate role is filled by C78.

This sequence belongs to the DsrE/TusD family. In terms of assembly, heterohexamer, formed by a dimer of trimers. The hexameric TusBCD complex contains 2 copies each of TusB, TusC and TusD. The TusBCD complex interacts with TusE.

The protein resides in the cytoplasm. Functionally, part of a sulfur-relay system required for 2-thiolation of 5-methylaminomethyl-2-thiouridine (mnm(5)s(2)U) at tRNA wobble positions. Accepts sulfur from TusA and transfers it in turn to TusE. The protein is Sulfurtransferase TusD of Escherichia coli O157:H7.